We begin with the raw amino-acid sequence, 734 residues long: Phosphoribosylformylglycinamidine synthase subunit PurL (734 aa).

The active site involves histidine 49. The ATP site is built by tyrosine 52 and lysine 91. Glutamate 93 contributes to the Mg(2+) binding site. Substrate contacts are provided by residues 94–97 (SHNH) and arginine 116. Histidine 95 serves as the catalytic Proton acceptor. Aspartate 117 is a binding site for Mg(2+). A substrate-binding site is contributed by glutamine 240. Position 268 (aspartate 268) interacts with Mg(2+). 312 to 314 (ESQ) provides a ligand contact to substrate. Positions 491 and 528 each coordinate ATP. Residue asparagine 529 coordinates Mg(2+). Serine 531 provides a ligand contact to substrate.

The protein belongs to the FGAMS family. As to quaternary structure, monomer. Part of the FGAM synthase complex composed of 1 PurL, 1 PurQ and 2 PurS subunits.

It localises to the cytoplasm. It carries out the reaction N(2)-formyl-N(1)-(5-phospho-beta-D-ribosyl)glycinamide + L-glutamine + ATP + H2O = 2-formamido-N(1)-(5-O-phospho-beta-D-ribosyl)acetamidine + L-glutamate + ADP + phosphate + H(+). The protein operates within purine metabolism; IMP biosynthesis via de novo pathway; 5-amino-1-(5-phospho-D-ribosyl)imidazole from N(2)-formyl-N(1)-(5-phospho-D-ribosyl)glycinamide: step 1/2. Functionally, part of the phosphoribosylformylglycinamidine synthase complex involved in the purines biosynthetic pathway. Catalyzes the ATP-dependent conversion of formylglycinamide ribonucleotide (FGAR) and glutamine to yield formylglycinamidine ribonucleotide (FGAM) and glutamate. The FGAM synthase complex is composed of three subunits. PurQ produces an ammonia molecule by converting glutamine to glutamate. PurL transfers the ammonia molecule to FGAR to form FGAM in an ATP-dependent manner. PurS interacts with PurQ and PurL and is thought to assist in the transfer of the ammonia molecule from PurQ to PurL. The polypeptide is Phosphoribosylformylglycinamidine synthase subunit PurL (Zymomonas mobilis subsp. mobilis (strain ATCC 31821 / ZM4 / CP4)).